Reading from the N-terminus, the 564-residue chain is Pestheic acid cluster transcriptional regulator 3 (564 aa).

The segment at residues Cys11 to Cys38 is a DNA-binding region (zn(2)-C6 fungal-type). The tract at residues Arg71–Ser123 is disordered. Polar residues predominate over residues Ser97–Ser113.

The protein localises to the nucleus. Its function is as follows. Transcription factor that, with ptaR1 and ptaR2, coregulates the expression of the gene cluster that mediates the biosynthesis of pestheic acid, a diphenyl ether which is a biosynthetic precursor of the unique chloropupukeananes. This Pestalotiopsis fici (strain W106-1 / CGMCC3.15140) protein is Pestheic acid cluster transcriptional regulator 3.